The chain runs to 55 residues: U17-myrmicitoxin-Mri1b (55 aa).

The N-terminal stretch at 1–31 (MENSRTSTFTAYVTVAFLLISTFVTMVVTES) is a signal peptide. Position 32 is a pyrrolidone carboxylic acid (Gln32).

Post-translationally, contains 1 disulfide bond. Expressed by the venom gland.

The protein resides in the secreted. The sequence is that of U17-myrmicitoxin-Mri1b from Manica rubida (European giant red ant).